The primary structure comprises 161 residues: MKISRIFKTIFLLDFLGGLNIAIKEIFKSKKTINYPFEKGKISPRFRGEHALRRYPNGEERCIACKLCEAVCPAQAITIESSERADGSRKTTRYDIDMMKCIYCGLCEESCPVDAIVQGPNFEFSTETREELYYNKEKLLDNGDRWENVLAANIKADNSHR.

2 4Fe-4S ferredoxin-type domains span residues 52-82 and 92-121; these read LRRYPNGEERCIACKLCEAVCPAQAITIESS and TRYDIDMMKCIYCGLCEESCPVDAIVQGPN. [4Fe-4S] cluster contacts are provided by C62, C65, C68, C72, C101, C104, C107, and C111.

It belongs to the complex I 23 kDa subunit family. NDH-1 is composed of 14 different subunits. Subunits NuoA, H, J, K, L, M, N constitute the membrane sector of the complex. The cofactor is [4Fe-4S] cluster.

It localises to the cell inner membrane. The catalysed reaction is a quinone + NADH + 5 H(+)(in) = a quinol + NAD(+) + 4 H(+)(out). In terms of biological role, NDH-1 shuttles electrons from NADH, via FMN and iron-sulfur (Fe-S) centers, to quinones in the respiratory chain. The immediate electron acceptor for the enzyme in this species is believed to be ubiquinone. Couples the redox reaction to proton translocation (for every two electrons transferred, four hydrogen ions are translocated across the cytoplasmic membrane), and thus conserves the redox energy in a proton gradient. This Pelagibacter ubique (strain HTCC1062) protein is NADH-quinone oxidoreductase subunit I.